Here is a 116-residue protein sequence, read N- to C-terminus: Cation channel sperm-associated auxiliary subunit TMEM262 (116 aa).

The Cytoplasmic portion of the chain corresponds to Met1 to Met16. A helical membrane pass occupies residues Met17–His38. Over Asn39–Phe51 the chain is Extracellular. The helical transmembrane segment at His52–Ser72 threads the bilayer. At Leu73 to Cys84 the chain is on the cytoplasmic side. The helical transmembrane segment at Phe85–Leu107 threads the bilayer. The Extracellular portion of the chain corresponds to Ala108–His116.

In terms of assembly, component of the CatSper complex or CatSpermasome composed of the core pore-forming members CATSPER1, CATSPER2, CATSPER3 and CATSPER4 as well as auxiliary members CATSPERB, CATSPERG, CATSPERD, CATSPERE, CATSPERZ, C2CD6/CATSPERT, TMEM249, TMEM262 and EFCAB9. HSPA1 may be an additional auxiliary complex member. The core complex members CATSPER1, CATSPER2, CATSPER3 and CATSPER4 form a heterotetrameric channel. The auxiliary CATSPERB, CATSPERG, CATSPERD and CATSPERE subunits form a pavilion-like structure over the pore which stabilizes the complex through interactions with CATSPER4, CATSPER3, CATSPER1 and CATSPER2 respectively. TMEM262/CATSPERH interacts with CATSPERB, further stabilizing the complex. C2CD6/CATSPERT interacts at least with CATSPERD and is required for targeting the CatSper complex in the flagellar membrane.

The protein localises to the cell projection. It localises to the cilium. The protein resides in the flagellum membrane. Its function is as follows. Auxiliary component of the CatSper complex, a complex involved in sperm cell hyperactivation. The protein is Cation channel sperm-associated auxiliary subunit TMEM262 of Homo sapiens (Human).